Consider the following 4246-residue polypeptide: Intermembrane lipid transfer protein vps13F (4246 aa).

One can recognise a Chorein N-terminal domain in the interval 2-113 (FESIVSNLLT…LLLQKKLKKL (112 aa)). Disordered stretches follow at residues 141-271 (IKEK…EDED), 401-420 (PKKS…PPPK), 591-759 (KAED…SILG), 914-944 (VSSS…EKKL), 964-1014 (KKSK…TNDE), 1217-1251 (QAQQ…IKSP), 1356-1379 (ISTH…DRVD), 1395-1436 (YNGV…KSKK), 1622-1683 (REKR…KSQS), 2101-2131 (LESL…QQQQ), 2211-2237 (HHSK…EKEK), 2471-2513 (QQQH…KSKQ), 2704-2756 (LSTS…QTTK), 3421-3449 (IDDD…TSPL), 3611-3652 (KTLN…NNQN), and 3794-3813 (NNNN…NIDE). Positions 168 to 201 (NASPVNSNNNNNNNSNLVSESNIPSSSSSSSSSL) are enriched in low complexity. The segment covering 207–217 (NSSKDANKSDD) has biased composition (basic and acidic residues). A compositionally biased stretch (acidic residues) spans 218–271 (TDMDVDDDDEFQEATEGDYDNEEEQDDHDEEDDLSDDDDDDDDEEDDYEMEDED). 2 stretches are compositionally biased toward low complexity: residues 401–413 (PKKS…TTTP) and 597–658 (QQQQ…SNST). The segment covering 659-668 (DSKDIMKSSG) has biased composition (basic and acidic residues). The span at 669–680 (DKNVNNNNNMGD) shows a compositional bias: low complexity. Residues 681–702 (NENKDNIDKKEENKNDDQDNKN) show a composition bias toward basic and acidic residues. Composition is skewed to low complexity over residues 725-747 (SGGW…QQQQ) and 914-924 (VSSSPSPVSSP). Composition is skewed to basic and acidic residues over residues 925–944 (SRDK…EKKL) and 987–1001 (DKYS…REES). Positions 1217-1241 (QAQQQAQQQQQSQHPSSNDDNSSSN) are enriched in low complexity. A compositionally biased stretch (acidic residues) spans 1400-1409 (SDDDNNDDEN). Composition is skewed to basic and acidic residues over residues 1410–1431 (DKTT…DSLK) and 1622–1634 (REKR…DKDN). Residues 1644-1670 (QQSIPQKQQQQQQQQQQQQQQQQQQQQ) are compositionally biased toward low complexity. Composition is skewed to low complexity over residues 2471–2506 (QQQH…NNNN), 2705–2755 (STST…TQTT), 3430–3449 (DSGS…TSPL), 3613–3652 (LNNN…NNQN), and 3794–3809 (NNNN…NDFN).

Belongs to the VPS13 family.

The protein resides in the membrane. Mediates the transfer of lipids between membranes at organelle contact sites. The protein is Intermembrane lipid transfer protein vps13F (vps13F) of Dictyostelium discoideum (Social amoeba).